A 953-amino-acid polypeptide reads, in one-letter code: UvrABC system protein A (953 aa).

Position 33–40 (33–40) interacts with ATP; the sequence is GLSGSGKS. 2 ABC transporter domains span residues 320-599 and 619-949; these read WGST…EESI and GHDN…RYLK. 652 to 659 serves as a coordination point for ATP; it reads GVSGSGKS. The C4-type zinc-finger motif lies at 752–778; that stretch reads CEACQGDGLIKIEMHFLPDVYVKCDIC.

This sequence belongs to the ABC transporter superfamily. UvrA family. In terms of assembly, forms a heterotetramer with UvrB during the search for lesions.

The protein localises to the cytoplasm. Its function is as follows. The UvrABC repair system catalyzes the recognition and processing of DNA lesions. UvrA is an ATPase and a DNA-binding protein. A damage recognition complex composed of 2 UvrA and 2 UvrB subunits scans DNA for abnormalities. When the presence of a lesion has been verified by UvrB, the UvrA molecules dissociate. The chain is UvrABC system protein A from Rickettsia bellii (strain RML369-C).